Reading from the N-terminus, the 72-residue chain is Translational regulator CsrA (72 aa).

It belongs to the CsrA/RsmA family. Homodimer; the beta-strands of each monomer intercalate to form a hydrophobic core, while the alpha-helices form wings that extend away from the core.

The protein localises to the cytoplasm. In terms of biological role, a translational regulator that binds mRNA to regulate translation initiation and/or mRNA stability. Usually binds in the 5'-UTR at or near the Shine-Dalgarno sequence preventing ribosome-binding, thus repressing translation. Its main target seems to be the major flagellin gene, while its function is anatagonized by FliW. This is Translational regulator CsrA from Agathobacter rectalis (strain ATCC 33656 / DSM 3377 / JCM 17463 / KCTC 5835 / VPI 0990) (Eubacterium rectale).